The following is a 1057-amino-acid chain: MLCWGNASYGQLGLGGIDEEIVLEPRRSDFFVNKKVRDVGCGLRHTVFVLDDGTVYTCGCNDLGQLGHEKSRKKPEQVVALDAQNIVAVACGEAHTLALNDKGQVYAWGLDSDGQLGLQGSEECIRVPRNIKSLSDIQIVQVACGYYHSLALSKASEVFCWGQNKYGQLGLGIDCQKQTSPQLIKSLLGIPFMQVAAGGAHSFVLTLSGAIFGWGRNKFGQLGLNDENDRYVPNLLKSLRSQKIVYICCGEDHTAALTKEGGVFTFGAGGYGQLGHNSTSHEINPRKVFELMGSIVTQVACGRQHTSAFVPSSGRIYSFGLGGNGQLGTGSTSNRKSPFTVKGNWFSYNGQCPQDIGSEDYFCVKRIFSGGDQSFSHYSSPQNCGPPDDFRCSDPSKQIWTVNEALIQKWLSYPSGRFPVEIANEIDGTFSSSGCLNGSFLAISNDDHYRTGTRFSGVDMNAARLLFHKLIQPDHPQISQQVAASLEKNLIPKLTSSLPDVEALRFYLTLPECPLMSDCNNFTTIAIPFGTALVNLEKAPLKVLENWWSVLEPPLFLKIVELFKEVVVHLLKLYKIGIPPSERRIFNSFLHTALKVLEILHRVNEKTGQLIQYDKFYIHEVQELIDIRNDYINWVQQQAYGVDVSHGVTELADIPVTICTYPFVFDAQAKTTLLQTDAVLQMQMAIDQAHRQNVSSLFLPVIESVNPCLILVVRRENIVGDAMEVLRKTKNIDYKKPLKVIFVGEDAVDAGGVRKEFFLLIMRELLDPKYGMFRYYEDSRLIWFSDKTFEDSDLFHLIGVICGLAIYNFTIVDLHFPLALYKKLLKRKPSLDDLKELMPAVGRSMQQLLDYPEDDIEETFCLNFTITVENFGATEVKELVLNGADTAVNRQNRQEFVDAYVDYIFNKSVASLFDAFHAGFHKVCGGKVLLLFQPNELQAMVIGNTNYDWKELEKNTEYKGEYWADHPTIKIFWEVFHELPLEKKKQFLLFLTGSDRIPILGMKSLKLVIQSTGGGESYLPVSHTCFNLLDLPKYTEKETLRCKLIQAIDHNEGFSLI.

7 RCC1 repeats span residues 1–51 (MLCW…FVLD), 52–101 (DGTV…ALND), 102–154 (KGQV…ALSK), 156–207 (SEVF…VLTL), 208–259 (SGAI…ALTK), 261–311 (GGVF…AFVP), and 313–366 (SGRI…CVKR). An HECT domain is found at 730–1057 (KNIDYKKPLK…IDHNEGFSLI (328 aa)). Residue cysteine 1025 is the Glycyl thioester intermediate of the active site.

In terms of tissue distribution, ubiquitously expressed, highest expression is found in testis during spermiogenesis. It is specifically found in spermatogonia, spermatocytes, and spermatids with little or no expression detectable in the spermatozoa, or interstitial cells.

It localises to the cytoplasm. Its subcellular location is the cytosol. The catalysed reaction is S-ubiquitinyl-[E2 ubiquitin-conjugating enzyme]-L-cysteine + [acceptor protein]-L-lysine = [E2 ubiquitin-conjugating enzyme]-L-cysteine + N(6)-ubiquitinyl-[acceptor protein]-L-lysine.. Its pathway is protein modification; protein ubiquitination. In terms of biological role, probable E3 ubiquitin-protein ligase involved in either protein trafficking or in the distribution of cellular structures. Required for spermatozoon maturation and fertility, and for the removal of the cytoplasmic droplet of the spermatozoon. E3 ubiquitin-protein ligases accept ubiquitin from an E2 ubiquitin-conjugating enzyme in the form of a thioester and then directly transfer it to targeted substrates. This Mus musculus (Mouse) protein is Probable E3 ubiquitin-protein ligase HERC4 (Herc4).